The chain runs to 286 residues: NH(3)-dependent NAD(+) synthetase (286 aa).

An ATP-binding site is contributed by 43–50 (GVSGGVDS). Asp-49 is a binding site for Mg(2+). Arg-131 provides a ligand contact to deamido-NAD(+). Residue Thr-151 participates in ATP binding. Glu-156 provides a ligand contact to Mg(2+). Deamido-NAD(+)-binding residues include Lys-164 and Asp-171. ATP contacts are provided by Lys-180 and Ser-202. Positions 257–286 (HEASSHKRSPPASPDLGEIKKHYKQHAGKK) are disordered. 262–263 (HK) is a binding site for deamido-NAD(+). The span at 277–286 (KHYKQHAGKK) shows a compositional bias: basic residues.

It belongs to the NAD synthetase family. In terms of assembly, homodimer.

It catalyses the reaction deamido-NAD(+) + NH4(+) + ATP = AMP + diphosphate + NAD(+) + H(+). The protein operates within cofactor biosynthesis; NAD(+) biosynthesis; NAD(+) from deamido-NAD(+) (ammonia route): step 1/1. Its function is as follows. Catalyzes the ATP-dependent amidation of deamido-NAD to form NAD. Uses ammonia as a nitrogen source. The sequence is that of NH(3)-dependent NAD(+) synthetase from Aeropyrum pernix (strain ATCC 700893 / DSM 11879 / JCM 9820 / NBRC 100138 / K1).